The chain runs to 270 residues: BPI fold-containing family A member 5 (270 aa).

The first 19 residues, 1-19, serve as a signal peptide directing secretion; it reads MFLAGSFIVLCGLLAQSTA. Cysteines 196 and 238 form a disulfide.

It belongs to the BPI/LBP/Plunc superfamily. Plunc family. In terms of tissue distribution, expressed in interpapillar epithelium of the anterior part of the tongue.

The protein resides in the secreted. In terms of biological role, may play a role in innate immunity in the oral cavity. The sequence is that of BPI fold-containing family A member 5 (Bpifa5) from Mus musculus (Mouse).